Consider the following 477-residue polypeptide: Ribulose bisphosphate carboxylase large chain (477 aa).

The propeptide occupies 1 to 2; the sequence is MS. Residue proline 3 is modified to N-acetylproline. Lysine 14 carries the post-translational modification N6,N6,N6-trimethyllysine. 2 residues coordinate substrate: asparagine 123 and threonine 173. Catalysis depends on lysine 175, which acts as the Proton acceptor. Residue lysine 177 participates in substrate binding. Mg(2+) contacts are provided by lysine 201, aspartate 203, and glutamate 204. Lysine 201 is subject to N6-carboxylysine. Histidine 294 functions as the Proton acceptor in the catalytic mechanism. 3 residues coordinate substrate: arginine 295, histidine 327, and serine 379.

This sequence belongs to the RuBisCO large chain family. Type I subfamily. As to quaternary structure, heterohexadecamer of 8 large chains and 8 small chains; disulfide-linked. The disulfide link is formed within the large subunit homodimers. Requires Mg(2+) as cofactor. In terms of processing, the disulfide bond which can form in the large chain dimeric partners within the hexadecamer appears to be associated with oxidative stress and protein turnover.

It is found in the plastid. The protein localises to the chloroplast. The catalysed reaction is 2 (2R)-3-phosphoglycerate + 2 H(+) = D-ribulose 1,5-bisphosphate + CO2 + H2O. It carries out the reaction D-ribulose 1,5-bisphosphate + O2 = 2-phosphoglycolate + (2R)-3-phosphoglycerate + 2 H(+). RuBisCO catalyzes two reactions: the carboxylation of D-ribulose 1,5-bisphosphate, the primary event in carbon dioxide fixation, as well as the oxidative fragmentation of the pentose substrate in the photorespiration process. Both reactions occur simultaneously and in competition at the same active site. This chain is Ribulose bisphosphate carboxylase large chain, found in Carthamus tinctorius (Safflower).